The chain runs to 116 residues: Large ribosomal subunit protein bL19 (116 aa).

This sequence belongs to the bacterial ribosomal protein bL19 family.

In terms of biological role, this protein is located at the 30S-50S ribosomal subunit interface and may play a role in the structure and function of the aminoacyl-tRNA binding site. This chain is Large ribosomal subunit protein bL19, found in Flavobacterium johnsoniae (strain ATCC 17061 / DSM 2064 / JCM 8514 / BCRC 14874 / CCUG 350202 / NBRC 14942 / NCIMB 11054 / UW101) (Cytophaga johnsonae).